Reading from the N-terminus, the 142-residue chain is Large ribosomal subunit protein uL11 (142 aa).

The protein belongs to the universal ribosomal protein uL11 family. As to quaternary structure, part of the ribosomal stalk of the 50S ribosomal subunit. Interacts with L10 and the large rRNA to form the base of the stalk. L10 forms an elongated spine to which L12 dimers bind in a sequential fashion forming a multimeric L10(L12)X complex. Post-translationally, one or more lysine residues are methylated.

Functionally, forms part of the ribosomal stalk which helps the ribosome interact with GTP-bound translation factors. This is Large ribosomal subunit protein uL11 from Shigella boydii serotype 4 (strain Sb227).